A 670-amino-acid chain; its full sequence is Probable Na(+)/H(+) antiporter nhx-3 (670 aa).

8 helical membrane passes run 41–61 (VYVI…FNLM), 73–93 (LLII…LSGV), 97–117 (SHAF…YFMP), 129–149 (LVFS…SLLI), 164–184 (EILV…IAIF), 192–212 (FLFI…VVLY), 235–255 (GLSF…FAIA), and 268–288 (ILAP…AEMV). N-linked (GlcNAc...) asparagine glycosylation is present at N310. A run of 4 helical transmembrane segments spans residues 325–345 (MLAQ…TLTS), 351–371 (FIFI…GIIV), 390–410 (FILS…VSIP), and 418–438 (MFIT…GITI). The segment at 648 to 670 (GDLKGHCGTSRKPKHSMFELRHV) is disordered.

This sequence belongs to the monovalent cation:proton antiporter 1 (CPA1) transporter (TC 2.A.36) family. In terms of processing, phosphorylated. In terms of tissue distribution, expressed in hypodermal cells of the main body syncytium, ut1 cells of the vulva and the spermathecal junction cell.

The protein resides in the endomembrane system. Plays a role in epithelial membrane transport processes. The chain is Probable Na(+)/H(+) antiporter nhx-3 (nhx-3) from Caenorhabditis elegans.